Here is an 82-residue protein sequence, read N- to C-terminus: U24 protein (82 aa).

A PPXY motif motif is present at residues 7-10 (PPSY). Residues 52–72 (FIILACLIISVILCLILILHI) traverse the membrane as a helical segment.

As to quaternary structure, interacts with host ITCH; this interaction probably mediates ITCH degradation. Interacts probably with NEDD4.

Its subcellular location is the membrane. Down-regulates of the TCR/CD3E complex and the transferrin receptor TFRC in host T-cells by blocking them from recycling back to the cell surface. The chain is U24 protein from Homo sapiens (Human).